Consider the following 658-residue polypeptide: MLNSVSLTFPDGSVRDYDAAMTGAGLAESISKSLAKKAVAYAINGTVRDLSDPLGKSGKVEIITRDDARALELIRHDTAHVLAEAVQELWPGTQVTIGPVIENGFYYDFARNEPFTPDDFPVIEKKMREIIARNKPFTKEVWSRDKAKKVFADKGERYKLELIDAIPEDQDLKIYAQGDWFDLCRGPHMASTGQIGNAFKLMKVAGAYWRGDSNNPMLTRIYGTAWADQAQLEAYQTMLEEAEKRDHRKLGREMDLFHFQEEGPGVVFWHAKGWKMFQNLVNYMRRRLDEQGYQEVNAPQVLDKSLWETSGHWGWYRDAMFKVTVAGDDTDDDRVFALKPMNCPGHVQIFKHGLKSYRDLPVKLAEFGNVHRYEPSGALHGLMRVRGFTQDDAHIFCTEEQLASECLRINDLILSTYADFGFDEISVKLSTRPDKRVGTDEAWDHAEAIMGSVLETIRTRSGNRIKTSINPGEGAFYGPKFEYVLKDAIGREWQCGTTQVDFNLPERFGAFYIGSDSEKKQPVMVHRAICGSMERFLGILIENYSGHFPLWFAPQQVVVATITSEADGYATEVVAKLKAAGLLAEADLRNEKINYKVREHSLAKVPVILVCGKREAEEQTVNIRRLGSRDQESLGLAEAIAQLTEEAVTPDRRRKRAA.

One can recognise a TGS domain in the interval 1-64; it reads MLNSVSLTFP…GKSGKVEIIT (64 aa). Residues 246 to 549 form a catalytic region; sequence DHRKLGREMD…LIENYSGHFP (304 aa). Zn(2+)-binding residues include C343, H394, and H526.

It belongs to the class-II aminoacyl-tRNA synthetase family. In terms of assembly, homodimer. Zn(2+) serves as cofactor.

It localises to the cytoplasm. It catalyses the reaction tRNA(Thr) + L-threonine + ATP = L-threonyl-tRNA(Thr) + AMP + diphosphate + H(+). Its function is as follows. Catalyzes the attachment of threonine to tRNA(Thr) in a two-step reaction: L-threonine is first activated by ATP to form Thr-AMP and then transferred to the acceptor end of tRNA(Thr). Also edits incorrectly charged L-seryl-tRNA(Thr). This is Threonine--tRNA ligase from Mesorhizobium japonicum (strain LMG 29417 / CECT 9101 / MAFF 303099) (Mesorhizobium loti (strain MAFF 303099)).